Reading from the N-terminus, the 262-residue chain is Octopine permease ATP-binding protein P (262 aa).

The ABC transporter domain occupies 9 to 254 (VQLKDIRKNF…PRTDRFRQFL (246 aa)). 41–48 (GSSGSGKS) serves as a coordination point for ATP.

It belongs to the ABC transporter superfamily.

Its subcellular location is the cell inner membrane. Functionally, component of the octopine active transport system probably consisting of four subunits: Q, M, P and T. The protein is Octopine permease ATP-binding protein P (occP) of Rhizobium radiobacter (Agrobacterium tumefaciens).